Here is a 445-residue protein sequence, read N- to C-terminus: Phosphoglucosamine mutase (445 aa).

The active-site Phosphoserine intermediate is the Ser-102. Mg(2+) is bound by residues Ser-102, Asp-241, Asp-243, and Asp-245. Ser-102 bears the Phosphoserine mark.

Belongs to the phosphohexose mutase family. The cofactor is Mg(2+). Activated by phosphorylation.

The enzyme catalyses alpha-D-glucosamine 1-phosphate = D-glucosamine 6-phosphate. Its function is as follows. Catalyzes the conversion of glucosamine-6-phosphate to glucosamine-1-phosphate. This is Phosphoglucosamine mutase from Acinetobacter baumannii (strain SDF).